We begin with the raw amino-acid sequence, 165 residues long: 6,7-dimethyl-8-ribityllumazine synthase (165 aa).

Residues Phe22, 56–58 (SME), and 80–82 (AVI) contribute to the 5-amino-6-(D-ribitylamino)uracil site. Residue 85 to 86 (ET) coordinates (2S)-2-hydroxy-3-oxobutyl phosphate. His88 (proton donor) is an active-site residue. Phe113 lines the 5-amino-6-(D-ribitylamino)uracil pocket. Arg127 serves as a coordination point for (2S)-2-hydroxy-3-oxobutyl phosphate.

The protein belongs to the DMRL synthase family.

It carries out the reaction (2S)-2-hydroxy-3-oxobutyl phosphate + 5-amino-6-(D-ribitylamino)uracil = 6,7-dimethyl-8-(1-D-ribityl)lumazine + phosphate + 2 H2O + H(+). Its pathway is cofactor biosynthesis; riboflavin biosynthesis; riboflavin from 2-hydroxy-3-oxobutyl phosphate and 5-amino-6-(D-ribitylamino)uracil: step 1/2. Its function is as follows. Catalyzes the formation of 6,7-dimethyl-8-ribityllumazine by condensation of 5-amino-6-(D-ribitylamino)uracil with 3,4-dihydroxy-2-butanone 4-phosphate. This is the penultimate step in the biosynthesis of riboflavin. The polypeptide is 6,7-dimethyl-8-ribityllumazine synthase (Thermotoga sp. (strain RQ2)).